The primary structure comprises 430 residues: Histidinol dehydrogenase (430 aa).

Tyr-130, Gln-191, and Asn-214 together coordinate NAD(+). Residues Ser-237, Gln-259, and His-262 each coordinate substrate. Positions 259 and 262 each coordinate Zn(2+). Catalysis depends on proton acceptor residues Glu-327 and His-328. Positions 328, 361, 415, and 420 each coordinate substrate. Asp-361 serves as a coordination point for Zn(2+). His-420 provides a ligand contact to Zn(2+).

It belongs to the histidinol dehydrogenase family. Requires Zn(2+) as cofactor.

It catalyses the reaction L-histidinol + 2 NAD(+) + H2O = L-histidine + 2 NADH + 3 H(+). It functions in the pathway amino-acid biosynthesis; L-histidine biosynthesis; L-histidine from 5-phospho-alpha-D-ribose 1-diphosphate: step 9/9. Its function is as follows. Catalyzes the sequential NAD-dependent oxidations of L-histidinol to L-histidinaldehyde and then to L-histidine. The protein is Histidinol dehydrogenase of Brucella abortus (strain 2308).